The sequence spans 228 residues: Heptaprenylglyceryl phosphate synthase (228 aa).

Lysine 12 is a sn-glycerol 1-phosphate binding site. Aspartate 14 and threonine 40 together coordinate Mg(2+). Sn-glycerol 1-phosphate-binding positions include 159-164 (YLEYSG), glycine 189, and 209-210 (GN).

Belongs to the GGGP/HepGP synthase family. Group I subfamily. Homodimer. It depends on Mg(2+) as a cofactor.

It carries out the reaction sn-glycerol 1-phosphate + all-trans-heptaprenyl diphosphate = 3-heptaprenyl-sn-glycero-1-phosphate + diphosphate. It participates in membrane lipid metabolism; glycerophospholipid metabolism. Prenyltransferase that catalyzes in vivo the transfer of the heptaprenyl moiety of heptaprenyl pyrophosphate (HepPP; 35 carbon atoms) to the C3 hydroxyl of sn-glycerol-1-phosphate (G1P), producing heptaprenylglyceryl phosphate (HepGP). This reaction is an ether-bond-formation step in the biosynthesis of archaea-type G1P-based membrane lipids found in Bacillales. This chain is Heptaprenylglyceryl phosphate synthase, found in Geobacillus sp. (strain WCH70).